Consider the following 177-residue polypeptide: Large ribosomal subunit protein uL10 (177 aa).

The protein belongs to the universal ribosomal protein uL10 family. In terms of assembly, part of the ribosomal stalk of the 50S ribosomal subunit. The N-terminus interacts with L11 and the large rRNA to form the base of the stalk. The C-terminus forms an elongated spine to which L12 dimers bind in a sequential fashion forming a multimeric L10(L12)X complex.

Forms part of the ribosomal stalk, playing a central role in the interaction of the ribosome with GTP-bound translation factors. The chain is Large ribosomal subunit protein uL10 from Thermoanaerobacter pseudethanolicus (strain ATCC 33223 / 39E) (Clostridium thermohydrosulfuricum).